Reading from the N-terminus, the 487-residue chain is 2-succinylbenzoate--CoA ligase (487 aa).

This sequence belongs to the ATP-dependent AMP-binding enzyme family. MenE subfamily.

It catalyses the reaction 2-succinylbenzoate + ATP + CoA = 2-succinylbenzoyl-CoA + AMP + diphosphate. It participates in quinol/quinone metabolism; 1,4-dihydroxy-2-naphthoate biosynthesis; 1,4-dihydroxy-2-naphthoate from chorismate: step 5/7. The protein operates within quinol/quinone metabolism; menaquinone biosynthesis. Its function is as follows. Converts 2-succinylbenzoate (OSB) to 2-succinylbenzoyl-CoA (OSB-CoA). This Bacillus velezensis (strain DSM 23117 / BGSC 10A6 / LMG 26770 / FZB42) (Bacillus amyloliquefaciens subsp. plantarum) protein is 2-succinylbenzoate--CoA ligase.